The following is a 1963-amino-acid chain: Myosin-4 (1963 aa).

A Myosin N-terminal SH3-like domain is found at 28–77; sequence DSKKNVWIPDPEEGYLAGEITATKGDQVTIVTARGNEVTLKKELVQEMNP. The region spanning 81–787 is the Myosin motor domain; that stretch reads EKTEDMSNLS…VLAHLEDIRD (707 aa). At Lys125 the chain carries N6,N6,N6-trimethyllysine. 174-181 contributes to the ATP binding site; sequence GESGAGKT. Actin-binding stretches follow at residues 662–684 and 766–780; these read LNNL…IPNE and RIGL…GVLA. Residues 848–1161 form an alpha-helical tailpiece (S2) region; the sequence is MLKAGKEAEE…LEELGEKLDE (314 aa). A coiled-coil region spans residues 848 to 1963; sequence MLKAGKEAEE…SPSRARASDF (1116 aa). Composition is skewed to basic and acidic residues over residues 970–988 and 1133–1146; these read LRKA…RSLQ and NERQ…RAKS. Disordered regions lie at residues 970-990 and 1125-1146; these read LRKA…LQDE and SELE…RAKS. Positions 1162–1173 are hinge; the sequence is QGGATAAQVEVN. The tract at residues 1162-1963 is light meromyosin (LMM); the sequence is QGGATAAQVE…SPSRARASDF (802 aa). 2 disordered regions span residues 1317–1336 and 1912–1963; these read LTSQ…RERQ and LEDA…ASDF. Residues 1322–1336 are compositionally biased toward basic and acidic residues; that stretch reads EEARRTADEEARERQ.

The protein belongs to the TRAFAC class myosin-kinesin ATPase superfamily. Myosin family. Muscle myosin is a hexameric protein that consists of 2 heavy chain subunits (MHC), 2 alkali light chain subunits (MLC) and 2 regulatory light chain subunits (MLC-2). Forms a complex composed of chaperone unc-45, unc-54 and ubiquitin-protein ligase ufd-2; promotes poly-ubiquitination of unfolded unc-54. Within the complex interacts with unc-45 (via UCS domain) and ufd-2. Interacts with itr-1 (via c-terminal coiled coil domain). In terms of processing, unfolded unc-54 is poly-ubiquitinated by ufd-2.

It is found in the cytoplasm. It localises to the myofibril. Required for muscle contraction. In Caenorhabditis elegans, this protein is Myosin-4 (unc-54).